We begin with the raw amino-acid sequence, 92 residues long: Small ribosomal subunit protein uS19 (92 aa).

It belongs to the universal ribosomal protein uS19 family.

Its function is as follows. Protein S19 forms a complex with S13 that binds strongly to the 16S ribosomal RNA. This chain is Small ribosomal subunit protein uS19, found in Methylobacterium radiotolerans (strain ATCC 27329 / DSM 1819 / JCM 2831 / NBRC 15690 / NCIMB 10815 / 0-1).